A 394-amino-acid chain; its full sequence is Dual-specificity RNA methyltransferase RlmN (394 aa).

The active-site Proton acceptor is Glu115. The 243-residue stretch at 121–363 folds into the Radical SAM core domain; the sequence is DEGRGTLCVS…SPIRTPRGED (243 aa). Cys128 and Cys368 are joined by a disulfide. Cys135, Cys139, and Cys142 together coordinate [4Fe-4S] cluster. S-adenosyl-L-methionine is bound by residues 194–195, Ser226, 248–250, and Asn325; these read GE and SFH. Residue Cys368 is the S-methylcysteine intermediate of the active site.

It belongs to the radical SAM superfamily. RlmN family. [4Fe-4S] cluster is required as a cofactor.

The protein resides in the cytoplasm. The enzyme catalyses adenosine(2503) in 23S rRNA + 2 reduced [2Fe-2S]-[ferredoxin] + 2 S-adenosyl-L-methionine = 2-methyladenosine(2503) in 23S rRNA + 5'-deoxyadenosine + L-methionine + 2 oxidized [2Fe-2S]-[ferredoxin] + S-adenosyl-L-homocysteine. The catalysed reaction is adenosine(37) in tRNA + 2 reduced [2Fe-2S]-[ferredoxin] + 2 S-adenosyl-L-methionine = 2-methyladenosine(37) in tRNA + 5'-deoxyadenosine + L-methionine + 2 oxidized [2Fe-2S]-[ferredoxin] + S-adenosyl-L-homocysteine. Functionally, specifically methylates position 2 of adenine 2503 in 23S rRNA and position 2 of adenine 37 in tRNAs. m2A2503 modification seems to play a crucial role in the proofreading step occurring at the peptidyl transferase center and thus would serve to optimize ribosomal fidelity. This chain is Dual-specificity RNA methyltransferase RlmN, found in Roseobacter denitrificans (strain ATCC 33942 / OCh 114) (Erythrobacter sp. (strain OCh 114)).